The sequence spans 200 residues: Molybdenum cofactor guanylyltransferase (200 aa).

GTP is bound by residues Leu15–Gly17, Lys28, Asp74, and Asp104. Asp104 contacts Mg(2+).

Belongs to the MobA family. Monomer. Mg(2+) is required as a cofactor.

Its subcellular location is the cytoplasm. It catalyses the reaction Mo-molybdopterin + GTP + H(+) = Mo-molybdopterin guanine dinucleotide + diphosphate. In terms of biological role, transfers a GMP moiety from GTP to Mo-molybdopterin (Mo-MPT) cofactor (Moco or molybdenum cofactor) to form Mo-molybdopterin guanine dinucleotide (Mo-MGD) cofactor. The polypeptide is Molybdenum cofactor guanylyltransferase (Pseudomonas fluorescens (strain SBW25)).